The primary structure comprises 180 residues: Pro-glucagon (180 aa).

The signal sequence occupies residues 1 to 20 (MKSVYFVAGLFIMLAQGSWQ). The disordered stretch occupies residues 23 to 58 (LQDTEEKPRSVSASQTDMLDDPDQMNEDKRHSQGTF). S54 is subject to Phosphoserine. A propeptide spanning residues 84-89 (NRNNIA) is cleaved from the precursor. Phosphoserine is present on residues S105 and S108. An Arginine amide modification is found at R127. The propeptide occupies 131–145 (DFPEEVAIVEELGRR). A phosphoserine mark is found at S150 and S152.

It belongs to the glucagon family. Post-translationally, proglucagon is post-translationally processed in a tissue-specific manner in pancreatic A cells and intestinal L cells. In pancreatic A cells, the major bioactive hormone is glucagon cleaved by PCSK2/PC2. In the intestinal L cells PCSK1/PC1 liberates GLP-1, GLP-2, glicentin and oxyntomodulin. GLP-1 is further N-terminally truncated by post-translational processing in the intestinal L cells resulting in GLP-1(7-37) GLP-1-(7-36)amide. The C-terminal amidation is neither important for the metabolism of GLP-1 nor for its effects on the endocrine pancreas.

It localises to the secreted. In terms of biological role, plays a key role in glucose metabolism and homeostasis. Regulates blood glucose by increasing gluconeogenesis and decreasing glycolysis. A counterregulatory hormone of insulin, raises plasma glucose levels in response to insulin-induced hypoglycemia. Plays an important role in initiating and maintaining hyperglycemic conditions in diabetes. Its function is as follows. Potent stimulator of glucose-dependent insulin release. Also stimulates insulin release in response to IL6. Plays important roles on gastric motility and the suppression of plasma glucagon levels. May be involved in the suppression of satiety and stimulation of glucose disposal in peripheral tissues, independent of the actions of insulin. Has growth-promoting activities on intestinal epithelium. May also regulate the hypothalamic pituitary axis (HPA) via effects on LH, TSH, CRH, oxytocin, and vasopressin secretion. Increases islet mass through stimulation of islet neogenesis and pancreatic beta cell proliferation. Inhibits beta cell apoptosis. Functionally, stimulates intestinal growth and up-regulates villus height in the small intestine, concomitant with increased crypt cell proliferation and decreased enterocyte apoptosis. The gastrointestinal tract, from the stomach to the colon is the principal target for GLP-2 action. Plays a key role in nutrient homeostasis, enhancing nutrient assimilation through enhanced gastrointestinal function, as well as increasing nutrient disposal. Stimulates intestinal glucose transport and decreases mucosal permeability. Significantly reduces food intake. Inhibits gastric emptying in humans. Suppression of gastric emptying may lead to increased gastric distension, which may contribute to satiety by causing a sensation of fullness. In terms of biological role, may modulate gastric acid secretion and the gastro-pyloro-duodenal activity. May play an important role in intestinal mucosal growth in the early period of life. The protein is Pro-glucagon (GCG) of Cavia porcellus (Guinea pig).